The sequence spans 283 residues: Tetraspanin-33 (283 aa).

Topologically, residues 1 to 24 (MARRPGAPAAYGEDFSFVSPLVKY) are cytoplasmic. Residues 25–45 (LLFFFNMLFWVISMVMVAVGV) form a helical membrane-spanning segment. Residues 46-64 (YARLMKHEEAALACLAVDP) lie on the Extracellular side of the membrane. Residues 65-85 (AILLIVVGILMFLLTFCGCIG) form a helical membrane-spanning segment. Residues 86–96 (SLRENICLLQT) lie on the Cytoplasmic side of the membrane. A helical transmembrane segment spans residues 97-117 (FSLCLTVVFLLQLAAGVLGFV). Residues 118-235 (FSDKVRGKVS…DRLVNWIHSN (118 aa)) are Extracellular-facing. Disulfide bonds link Cys-156-Cys-224, Cys-157-Cys-189, Cys-173-Cys-183, and Cys-190-Cys-203. A glycan (N-linked (GlcNAc...) asparagine) is linked at Asn-172. Residues 236–256 (LFVLGGVALGLAIPQLVGIML) traverse the membrane as a helical segment. The Cytoplasmic portion of the chain corresponds to 257-283 (SMILVSQIKDQIKLQLYNQQHRADPWY).

The protein belongs to the tetraspanin (TM4SF) family. Homodimer; disulfide-linked. Interacts (via extracellular domain) with ADAM10 (via extracellular domain). Interacts (via cytoplasmic domain) with PLEKHA7 (via WW domains); the interaction is dependent on PDZD11 being bound to PLEKHA7 and facilitates the docking of ADAM10 to zonula adherens.

The protein localises to the cell membrane. The protein resides in the cell junction. Its subcellular location is the adherens junction. It localises to the cytoplasm. In terms of biological role, part of TspanC8 subgroup, composed of 6 members that interact with the transmembrane metalloprotease ADAM10. This interaction is required for ADAM10 exit from the endoplasmic reticulum and for enzymatic maturation and trafficking to the cell surface as well as substrate specificity. Different TspanC8/ADAM10 complexes have distinct substrates. Plays an important role in normal erythropoiesis. It has a role in the differentiation of erythroid progenitors. Negatively regulates ligand-induced Notch activity probably by regulating ADAM10 activity. Mediates docking of ADAM10 to zonula adherens by interacting with ADAM10 and, in a PDZD11-dependent manner, with the zonula adherens protein PLEKHA7. In Bos taurus (Bovine), this protein is Tetraspanin-33 (TSPAN33).